Consider the following 114-residue polypeptide: Hydrogenase maturation factor HypA (114 aa).

His2 contributes to the Ni(2+) binding site. Zn(2+)-binding residues include Cys73, Cys76, Cys90, and Cys93.

Belongs to the HypA/HybF family.

Involved in the maturation of [NiFe] hydrogenases. Required for nickel insertion into the metal center of the hydrogenase. In Klebsiella pneumoniae (strain 342), this protein is Hydrogenase maturation factor HypA.